A 570-amino-acid chain; its full sequence is Sulfite reductase [NADPH] hemoprotein beta-component (570 aa).

4 residues coordinate [4Fe-4S] cluster: cysteine 434, cysteine 440, cysteine 479, and cysteine 483. Cysteine 483 contributes to the siroheme binding site.

It belongs to the nitrite and sulfite reductase 4Fe-4S domain family. In terms of assembly, alpha(8)-beta(8). The alpha component is a flavoprotein, the beta component is a hemoprotein. Requires siroheme as cofactor. [4Fe-4S] cluster is required as a cofactor.

It carries out the reaction hydrogen sulfide + 3 NADP(+) + 3 H2O = sulfite + 3 NADPH + 4 H(+). It participates in sulfur metabolism; hydrogen sulfide biosynthesis; hydrogen sulfide from sulfite (NADPH route): step 1/1. Component of the sulfite reductase complex that catalyzes the 6-electron reduction of sulfite to sulfide. This is one of several activities required for the biosynthesis of L-cysteine from sulfate. The chain is Sulfite reductase [NADPH] hemoprotein beta-component from Salmonella paratyphi B (strain ATCC BAA-1250 / SPB7).